The primary structure comprises 313 residues: Olfactory receptor 4M1 (313 aa).

The Extracellular portion of the chain corresponds to 1 to 25; that stretch reads METANYTKVTEFVLTGLSQTREVQL. Residue Asn-5 is glycosylated (N-linked (GlcNAc...) asparagine). Residues 26-49 form a helical membrane-spanning segment; that stretch reads VLFVIFLSFYLFILPGNILIICTI. Topologically, residues 50–57 are cytoplasmic; that stretch reads RLDPHLTS. The chain crosses the membrane as a helical span at residues 58–79; it reads PMYFLLANLALLDIWYSSITAP. The Extracellular portion of the chain corresponds to 80 to 100; the sequence is KMLIDFFVERKIISFGGCIAQ. Cysteines 97 and 189 form a disulfide. A helical transmembrane segment spans residues 101-120; that stretch reads LFFLHFVGASEMFLLTVMAY. Over 121-139 the chain is Cytoplasmic; sequence DRYAAICRPLHYATIMNRR. The helical transmembrane segment at 140 to 158 threads the bilayer; that stretch reads LCCILVALSWMGGFIHSII. Residues 159–195 lie on the Extracellular side of the membrane; it reads QVALIVRLPFCGPNELDSYFCDITQVVRIACANTFPE. Residues 196–219 traverse the membrane as a helical segment; that stretch reads ELVMICSSGLISVVCFIALLMSYA. The Cytoplasmic segment spans residues 220–237; the sequence is FLLALLKKHSGSGENTNR. A helical membrane pass occupies residues 238–260; that stretch reads AMSTCYSHITIVVLMFGPSIYIY. Residues 261–271 lie on the Extracellular side of the membrane; the sequence is ARPFDSFSLDK. Residues 272–291 traverse the membrane as a helical segment; that stretch reads VVSVFHTVIFPLLNPIIYTL. Topologically, residues 292–313 are cytoplasmic; sequence RNKEVKAAMRKVVTKYILCEEK.

Belongs to the G-protein coupled receptor 1 family. As to expression, highly expressed in the testis and olfactory bulb.

It is found in the cell membrane. Olfactory receptor that acts as a receptor of Asprosin hormone, potentially at the surface of hepatocytes and may help to promote hepatocyte glucose release. In Homo sapiens (Human), this protein is Olfactory receptor 4M1.